The chain runs to 400 residues: Argininosuccinate synthase (400 aa).

Residues 10-18 (AYSGGVDTS) and Ala38 each bind ATP. An L-citrulline-binding site is contributed by Tyr89. Position 119 (Gly119) interacts with ATP. Positions 121, 125, and 126 each coordinate L-aspartate. Asn125 contributes to the L-citrulline binding site. 5 residues coordinate L-citrulline: Arg129, Ser177, Ser186, Glu262, and Tyr274.

The protein belongs to the argininosuccinate synthase family. Type 1 subfamily. As to quaternary structure, homotetramer.

It is found in the cytoplasm. The enzyme catalyses L-citrulline + L-aspartate + ATP = 2-(N(omega)-L-arginino)succinate + AMP + diphosphate + H(+). The protein operates within amino-acid biosynthesis; L-arginine biosynthesis; L-arginine from L-ornithine and carbamoyl phosphate: step 2/3. Its activity is regulated as follows. Activity decreases to 53.9% and 18.4% in the presence of 1 mM and 5 mM arginine, respectively. Activity also decreases to 80.1%, 78.1% and 92.1% in the presence of 5 mM ornithine, lysine and succinate, respectively. Activity does not decrease in the presence of glutamate, glutamine or asparagine. Functionally, catalyzes the condensation of citrulline and aspartate into argininosuccinate, the immediate precursor of arginine. SyArgG is the rate-limiting step in arginine biosynthesis in Synechocystis PCC 6803. This is Argininosuccinate synthase from Synechocystis sp. (strain ATCC 27184 / PCC 6803 / Kazusa).